The following is a 548-amino-acid chain: MSSPPLHGLSSGGHLSRDPPPRSWSPRDKCSYLGLSHGNLRVHYKGHGKTSKDAASVRSTHPIPAACGIFYFEVKIISKGRDGYMGIGLSTQGVNLSRLPGWDKHSYGYHGDDGHSFCSSGTGQPYGPTFTTGDVIGCCVNLIDNTCFYTKNGHSLGIAFTDLPPNLYPTVGLQTPGEVVDANFGQSPFVFDIEDYIREWRTKIQAQIERFPVGGEWQSMIQRMVSSYLVHHGYCSTAEAFAKSTDQTVQEELASIKNRQRIQKLVLSGRMGEAIETTQQLYPSLLERNPNLLFTLKVRQFIEMVNGTDSEVRCLGNRSLKSLDGCSGSDSNCSNGIISNKAHQTHCHSKSQSSNLNVTELNSINMTMSHQLNSYSSNDVEMETDHYSNGFSASTSNGFLNGSSRHEPELEECDTEMEVDTSHGRRQLCGGSQAAVERMICFGRELQAMSEQLRRERGKNATNKNMLKDAFSLLAYSDPWNSPVGYQLDPIQREHVCSSLNSAILDIHNLPKQPPLSLALEQASQCLEMMAQCGIGSCAFARVADYLH.

The span at 1 to 14 (MSSPPLHGLSSGGH) shows a compositional bias: low complexity. Residues 1–26 (MSSPPLHGLSSGGHLSRDPPPRSWSP) are disordered. Residues 2 to 189 (SSPPLHGLSS…VDANFGQSPF (188 aa)) enclose the B30.2/SPRY domain. Over residues 15 to 26 (LSRDPPPRSWSP) the composition is skewed to basic and acidic residues. Residues 217-249 (WQSMIQRMVSSYLVHHGYCSTAEAFAKSTDQTV) form the LisH domain. One can recognise a CTLH domain in the interval 255-312 (SIKNRQRIQKLVLSGRMGEAIETTQQLYPSLLERNPNLLFTLKVRQFIEMVNGTDSEV).

Belongs to the RANBP9/10 family. As to quaternary structure, identified in the CTLH complex that contains at least MAEA, RMND5A (or alternatively its paralog RMND5B), GID8, WDR26, and RANBP9 and/or RANBP10.

It is found in the cytoplasm. The protein resides in the cell membrane. The protein localises to the nucleus. Its function is as follows. May act as scaffolding protein, and as adapter protein to couple membrane receptors to intracellular signaling pathways. Acts as a mediator of cell spreading and actin cytoskeleton rearrangement. Core component of the CTLH E3 ubiquitin-protein ligase complex that mediates ubiquitination and subsequent proteasomal degradation of target proteins. This is Ran-binding protein 9 (ranbp9) from Xenopus tropicalis (Western clawed frog).